We begin with the raw amino-acid sequence, 404 residues long: Formate-dependent phosphoribosylglycinamide formyltransferase (404 aa).

N(1)-(5-phospho-beta-D-ribosyl)glycinamide-binding positions include Glu25–Leu26 and Glu85. ATP contacts are provided by residues Arg118, Lys159, Ser164 to Gln169, Glu199 to Ile202, and Glu207. An ATP-grasp domain is found at Arg123–Leu318. Positions 277 and 289 each coordinate Mg(2+). N(1)-(5-phospho-beta-D-ribosyl)glycinamide is bound by residues Asp296, Lys365, and Arg372–Arg373.

Belongs to the PurK/PurT family. As to quaternary structure, homodimer.

It catalyses the reaction N(1)-(5-phospho-beta-D-ribosyl)glycinamide + formate + ATP = N(2)-formyl-N(1)-(5-phospho-beta-D-ribosyl)glycinamide + ADP + phosphate + H(+). The protein operates within purine metabolism; IMP biosynthesis via de novo pathway; N(2)-formyl-N(1)-(5-phospho-D-ribosyl)glycinamide from N(1)-(5-phospho-D-ribosyl)glycinamide (formate route): step 1/1. Its function is as follows. Involved in the de novo purine biosynthesis. Catalyzes the transfer of formate to 5-phospho-ribosyl-glycinamide (GAR), producing 5-phospho-ribosyl-N-formylglycinamide (FGAR). Formate is provided by PurU via hydrolysis of 10-formyl-tetrahydrofolate. The polypeptide is Formate-dependent phosphoribosylglycinamide formyltransferase (Burkholderia pseudomallei (strain 1106a)).